Consider the following 149-residue polypeptide: UPF0178 protein VFMJ11_0615 (149 aa).

It belongs to the UPF0178 family.

This chain is UPF0178 protein VFMJ11_0615, found in Aliivibrio fischeri (strain MJ11) (Vibrio fischeri).